The sequence spans 41 residues: DDGVEMTEEEVKRGIMDTVKNAAKDLAGQLLDKLKCKITAC.

The propeptide occupies 1 to 11 (DDGVEMTEEEV). A disulfide bridge connects residues Cys36 and Cys41.

It belongs to the frog skin active peptide (FSAP) family. Ranatuerin subfamily.

Its subcellular location is the secreted. Antimicrobial peptide. The protein is Ranatuerin-2PLg of Lithobates palustris (Pickerel frog).